The sequence spans 322 residues: Follistatin-A (322 aa).

The signal sequence occupies residues 1–32; that stretch reads MLRMLKRQQLHPGMILLLFWLCYLIEDQKVQA. Positions 33–106 constitute a TB domain; sequence GNCWLQQGKN…TCDNVDCGPG (74 aa). 8 disulfide bridges follow: C35-C58, C45-C91, C59-C94, C98-C109, C103-C119, C121-C153, C125-C146, and C135-C167. N-linked (GlcNAc...) asparagine glycosylation occurs at N75. The region spanning 97–120 is the Follistatin-like 1 domain; sequence TCDNVDCGPGKRCKMNRRSKPRCV. 3 consecutive Kazal-like domains span residues 103 to 169, 189 to 244, and 267 to 321; these read CGPG…KCKK, NAYC…KCIK, and RGRC…SCNC. The N-linked (GlcNAc...) asparagine glycan is linked to N127. The 24-residue stretch at 170 to 193 folds into the Follistatin-like 2 domain; it reads TCRDVLCPGSSTCVVDQTNNAYCV. 3 cysteine pairs are disulfide-bonded: C195/C228, C199/C221, and C210/C242. In terms of domain architecture, Follistatin-like 3 spans 247-271; that stretch reads SCDDIHCSAGKKCLWDAKMSRGRCA. Cystine bridges form between C273-C305, C277-C298, and C287-C319. N291 carries an N-linked (GlcNAc...) asparagine glycan.

As to quaternary structure, monomer. In terms of tissue distribution, not expressed in the organizer region. Expression in gastrulating embryos is confined to anterior and paraxial regions, which give rise to head mesoderm and the first five somites. In addition, expressed transiently in a subset of cells in the posterior notochord anlage. Later, expression is seen in brain, eyes and somites.

Its function is as follows. Binds directly to activin and functions as an activin antagonist. Specific inhibitor of the biosynthesis and secretion of pituitary follicle stimulating hormone (fsh). Inhibits bmp-signaling during later stages of development including late phases of dorsoventral patterning, to refine the early pattern set up by the interaction of chordino and bmp2/4. Not involved in organizer function or early phases of dorsoventral pattern formation. The polypeptide is Follistatin-A (fsta) (Danio rerio (Zebrafish)).